The following is a 101-amino-acid chain: Enhancer of yellow 2 transcription factor (101 aa).

This sequence belongs to the ENY2 family. As to quaternary structure, component of the nuclear pore complex (NPC)-associated AMEX complex (anchoring and mRNA export complex), composed of at least e(y)2 and xmas-2. Component of the SAGA transcription coactivator-HAT complexes, at least composed of Ada2b, e(y)2, Pcaf/Gcn5, Taf10 and Nipped-A/Trrap. Within the SAGA complex, e(y)2, Sgf11, and not/nonstop form an additional subcomplex of SAGA called the DUB module (deubiquitination module). Component of the THO complex, composed of at least e(y)2, HPR1, THO2, THOC5, THOC6 and THOC7. Interacts with e(y)1. Interacts with su(Hw) (via zinc fingers). Interacts with xmas-2; required for localization to the nuclear periphery. Interacts with the nuclear pore complex (NPC).

The protein localises to the nucleus. It localises to the nucleoplasm. It is found in the cytoplasm. In terms of biological role, involved in mRNA export coupled transcription activation by association with both the AMEX and the SAGA complexes. The SAGA complex is a multiprotein complex that activates transcription by remodeling chromatin and mediating histone acetylation and deubiquitination. Within the SAGA complex, participates in a subcomplex that specifically deubiquitinates histone H2B. The SAGA complex is recruited to specific gene promoters by activators, where it is required for transcription. Required for nuclear receptor-mediated transactivation. Involved in transcription elongation by recruiting the THO complex onto nascent mRNA. The AMEX complex functions in docking export-competent ribonucleoprotein particles (mRNPs) to the nuclear entrance of the nuclear pore complex (nuclear basket). AMEX participates in mRNA export and accurate chromatin positioning in the nucleus by tethering genes to the nuclear periphery. In Drosophila erecta (Fruit fly), this protein is Enhancer of yellow 2 transcription factor.